The following is a 295-amino-acid chain: uncharacterized protein (295 aa).

Residues 1–13 show a composition bias toward basic residues; that stretch reads MRHSVARPTRLPR. Disordered regions lie at residues 1 to 111 and 183 to 295; these read MRHS…AGLS and TSAF…PRDS. Residues 57–67 are compositionally biased toward low complexity; the sequence is AGPSAGAAARP. Pro residues predominate over residues 68–77; it reads AAPPPQPREP. 2 stretches are compositionally biased toward basic and acidic residues: residues 245–257 and 280–295; these read LRPKGARADDRRP and GEPHKAGEVGNHPRDS.

This is an uncharacterized protein from Homo sapiens (Human).